Consider the following 149-residue polypeptide: Inner membrane protein YidI (149 aa).

The Cytoplasmic portion of the chain corresponds to 1–8 (MGIIAQNK). The chain crosses the membrane as a helical span at residues 9–31 (ISSLGMLFGAIALMMGIIHFSFG). At 32–77 (PFSAPPPTFESIVADKTAEIKRGLLAGIKGEKITTVEKKEDVDVDK) the chain is on the periplasmic side. A helical transmembrane segment spans residues 78-97 (ILNQSGIALAIAALLCAFIG). The Cytoplasmic portion of the chain corresponds to 98–117 (GMRKENRWGIRGALVFGGGT). The chain crosses the membrane as a helical span at residues 118–140 (LAFHTLLFGIGIVCSILLIFLIF). The Periplasmic segment spans residues 141–149 (SFLTGGSLV).

It localises to the cell inner membrane. The sequence is that of Inner membrane protein YidI (yidI) from Escherichia coli (strain K12).